The sequence spans 401 residues: MAAATVTVEEVRKAQRATGPATVLAIGTATPANCVHQADYPDYYFRITKSEHMTELKEKFKRMCDKSQIRKRYMHLTEEYLAENPNMCAYMAPSLDARQDIVVVEVPKLGKAAAHKAIKEWGQPKSKITHLVFCTTSGVDMPGADYQLTKMLGLRPSVNRLMMYQQGCFAGGTVLRVAKDLAENNRGARVLVVCSEITAVTFRGPSESHLDSMVGQALFGDGAAAVIVGADPDERVERPLFQLVSASQTILPDSEGAIDGHLREVGLTFHLLKDVPGLISKNIERSLEEAFKPLGITDYNSIFWVAHPGGPAILDQVEAKVGLEKERMRATRHVLSEYGNMSSACVLFILDEMRKRSAEDGQATTGEGFDWGVLFGFGPGLTVETVVLHSVPITTGAAITA.

Cys168 is a catalytic residue.

The protein belongs to the thiolase-like superfamily. Chalcone/stilbene synthases family.

The enzyme catalyses (E)-4-coumaroyl-CoA + 3 malonyl-CoA + 3 H(+) = 2',4,4',6'-tetrahydroxychalcone + 3 CO2 + 4 CoA. It participates in secondary metabolite biosynthesis; flavonoid biosynthesis. Its function is as follows. The primary product of this enzyme is 4,2',4',6'-tetrahydroxychalcone (also termed naringenin-chalcone or chalcone) which can under specific conditions spontaneously isomerize into naringenin. The sequence is that of Chalcone synthase 5 (CHS5) from Sorghum bicolor (Sorghum).